The sequence spans 62 residues: Small ribosomal subunit protein eS27 (62 aa).

Zn(2+) is bound by residues C17, C20, C36, and C39. The C4-type zinc-finger motif lies at 17–39; the sequence is CNDCENEQIIFGSASRKITCVVC.

It belongs to the eukaryotic ribosomal protein eS27 family. Part of the 30S ribosomal subunit. Zn(2+) serves as cofactor.

The chain is Small ribosomal subunit protein eS27 from Methanosarcina mazei (strain ATCC BAA-159 / DSM 3647 / Goe1 / Go1 / JCM 11833 / OCM 88) (Methanosarcina frisia).